A 278-amino-acid polypeptide reads, in one-letter code: NH(3)-dependent NAD(+) synthetase (278 aa).

39–46 contacts ATP; it reads GVSGGVDS. Asp-45 is a Mg(2+) binding site. Residue Arg-121 participates in deamido-NAD(+) binding. Thr-141 provides a ligand contact to ATP. Residue Glu-146 participates in Mg(2+) binding. Residues Lys-154 and Asp-161 each contribute to the deamido-NAD(+) site. ATP is bound by residues Lys-170 and Ser-192. 252–253 serves as a coordination point for deamido-NAD(+); it reads HK.

This sequence belongs to the NAD synthetase family. In terms of assembly, homodimer.

The catalysed reaction is deamido-NAD(+) + NH4(+) + ATP = AMP + diphosphate + NAD(+) + H(+). It functions in the pathway cofactor biosynthesis; NAD(+) biosynthesis; NAD(+) from deamido-NAD(+) (ammonia route): step 1/1. Its function is as follows. Catalyzes the ATP-dependent amidation of deamido-NAD to form NAD. Uses ammonia as a nitrogen source. In Saccharolobus solfataricus (strain ATCC 35092 / DSM 1617 / JCM 11322 / P2) (Sulfolobus solfataricus), this protein is NH(3)-dependent NAD(+) synthetase.